A 284-amino-acid chain; its full sequence is Isopentenyl-diphosphate delta-isomerase (284 aa).

A substrate-binding site is contributed by Lys77. 2 residues coordinate Mg(2+): His81 and His92. Residues 90–256 (LLHRAFSVFL…SLVFTPWFKL (167 aa)) enclose the Nudix hydrolase domain. Residues Arg111 and Lys115 each coordinate substrate. The active site involves Cys127. Residue Ser128 coordinates substrate. The Nudix box motif lies at 128–172 (SHPLCVPSELGVDSSLEGSKDVNNLTNAVKGAKVAAQRKLEHELG). Mg(2+) is bound by residues Glu204 and Glu206. Glu206 is an active-site residue.

Belongs to the IPP isomerase type 1 family. Requires Mg(2+) as cofactor.

It localises to the cytoplasm. It carries out the reaction isopentenyl diphosphate = dimethylallyl diphosphate. It participates in isoprenoid biosynthesis; dimethylallyl diphosphate biosynthesis; dimethylallyl diphosphate from isopentenyl diphosphate: step 1/1. Functionally, isopentenyl-diphosphate delta-isomerase; part of the second module of ergosterol biosynthesis pathway that includes the middle steps of the pathway. IDI1 catalyzes the 1,3-allylic rearrangement of isopentenyl (IPP) to its highly electrophilic allylic isomer, dimethylallyl diphosphate (DMAPP). The second module is carried out in the vacuole and involves the formation of farnesyl diphosphate, which is also an important intermediate in the biosynthesis of ubiquinone, dolichol, heme and prenylated proteins. Activity by the mevalonate kinase ERG12 first converts mevalonate into 5-phosphomevalonate. 5-phosphomevalonate is then further converted to 5-diphosphomevalonate by the phosphomevalonate kinase ERG8. The diphosphomevalonate decarboxylase MVD then produces isopentenyl diphosphate. The isopentenyl-diphosphate delta-isomerase IDI1 then catalyzes the 1,3-allylic rearrangement of the homoallylic substrate isopentenyl (IPP) to its highly electrophilic allylic isomer, dimethylallyl diphosphate (DMAPP). Finally the farnesyl diphosphate synthase ERG20 catalyzes the sequential condensation of isopentenyl pyrophosphate with dimethylallyl pyrophosphate, and then with the resultant geranylpyrophosphate to the ultimate product farnesyl pyrophosphate. This chain is Isopentenyl-diphosphate delta-isomerase, found in Candida albicans (strain SC5314 / ATCC MYA-2876) (Yeast).